The chain runs to 124 residues: Fluoride-specific ion channel FluC (124 aa).

A run of 4 helical transmembrane segments spans residues 1 to 21, 36 to 56, 66 to 86, and 94 to 114; these read MAYL…HFIN, TFFI…YLAF, LFLM…SLDA, and AVGL…AGLF. G74 and T77 together coordinate Na(+).

This sequence belongs to the fluoride channel Fluc/FEX (TC 1.A.43) family.

Its subcellular location is the cell inner membrane. It carries out the reaction fluoride(in) = fluoride(out). Na(+) is not transported, but it plays an essential structural role and its presence is essential for fluoride channel function. In terms of biological role, fluoride-specific ion channel. Important for reducing fluoride concentration in the cell, thus reducing its toxicity. This Rhodopseudomonas palustris (strain ATCC BAA-98 / CGA009) protein is Fluoride-specific ion channel FluC.